The following is a 257-amino-acid chain: Thiazole synthase (257 aa).

K96 acts as the Schiff-base intermediate with DXP in catalysis. Residues G157, 184–185 (AG), and 206–207 (NT) each bind 1-deoxy-D-xylulose 5-phosphate.

This sequence belongs to the ThiG family. As to quaternary structure, homotetramer. Forms heterodimers with either ThiH or ThiS.

It localises to the cytoplasm. The enzyme catalyses [ThiS sulfur-carrier protein]-C-terminal-Gly-aminoethanethioate + 2-iminoacetate + 1-deoxy-D-xylulose 5-phosphate = [ThiS sulfur-carrier protein]-C-terminal Gly-Gly + 2-[(2R,5Z)-2-carboxy-4-methylthiazol-5(2H)-ylidene]ethyl phosphate + 2 H2O + H(+). It participates in cofactor biosynthesis; thiamine diphosphate biosynthesis. Catalyzes the rearrangement of 1-deoxy-D-xylulose 5-phosphate (DXP) to produce the thiazole phosphate moiety of thiamine. Sulfur is provided by the thiocarboxylate moiety of the carrier protein ThiS. In vitro, sulfur can be provided by H(2)S. This chain is Thiazole synthase, found in Rhizobium etli (strain ATCC 51251 / DSM 11541 / JCM 21823 / NBRC 15573 / CFN 42).